Here is a 331-residue protein sequence, read N- to C-terminus: High-affinity nickel-transport protein NixA (331 aa).

The next 7 membrane-spanning stretches (helical) occupy residues 3 to 23 (LWFP…ALLF), 77 to 97 (MGHS…IAWA), 110 to 130 (VVGT…NAII), 184 to 204 (PVGF…LLAL), 213 to 233 (VVGM…FDTL), 259 to 279 (ITAL…FQVI), and 302 to 322 (DLGY…FFLW).

The protein belongs to the NiCoT transporter (TC 2.A.52) family.

The protein localises to the cell inner membrane. Its function is as follows. High-affinity nickel intake protein. Imports nickel ions in an energy-dependent fashion. Necessary for the expression of catalytically active urease. The polypeptide is High-affinity nickel-transport protein NixA (nixA) (Helicobacter pylori (strain J99 / ATCC 700824) (Campylobacter pylori J99)).